The primary structure comprises 431 residues: Glutamate-1-semialdehyde 2,1-aminomutase (431 aa).

Lysine 265 bears the N6-(pyridoxal phosphate)lysine mark.

Belongs to the class-III pyridoxal-phosphate-dependent aminotransferase family. HemL subfamily. As to quaternary structure, homodimer. Requires pyridoxal 5'-phosphate as cofactor.

It is found in the cytoplasm. It catalyses the reaction (S)-4-amino-5-oxopentanoate = 5-aminolevulinate. It participates in porphyrin-containing compound metabolism; protoporphyrin-IX biosynthesis; 5-aminolevulinate from L-glutamyl-tRNA(Glu): step 2/2. This chain is Glutamate-1-semialdehyde 2,1-aminomutase, found in Aliivibrio salmonicida (strain LFI1238) (Vibrio salmonicida (strain LFI1238)).